The chain runs to 304 residues: Probable alpha-L-glutamate ligase 2 (304 aa).

The region spanning 107 to 290 (HQLLARKGVG…IAGAIIDYIV (184 aa)) is the ATP-grasp domain. ATP contacts are provided by residues Lys-144, 181 to 182 (EF), Asp-190, and 214 to 216 (RSN). Residues Asp-251, Glu-263, and Asn-265 each contribute to the Mg(2+) site. Mn(2+)-binding residues include Asp-251, Glu-263, and Asn-265.

It belongs to the RimK family. Requires Mg(2+) as cofactor. It depends on Mn(2+) as a cofactor.

The chain is Probable alpha-L-glutamate ligase 2 from Hahella chejuensis (strain KCTC 2396).